The primary structure comprises 210 residues: Cell division protein SepF (210 aa).

The tract at residues 13-101 (GLADGDEYDE…EPVDPGYRAP (89 aa)) is disordered. 2 stretches are compositionally biased toward basic and acidic residues: residues 22–70 (EQPR…ERPE) and 83–93 (VEPRRPARPEP).

It belongs to the SepF family. In terms of assembly, homodimer. Interacts with FtsZ.

It is found in the cytoplasm. In terms of biological role, cell division protein that is part of the divisome complex and is recruited early to the Z-ring. Probably stimulates Z-ring formation, perhaps through the cross-linking of FtsZ protofilaments. Its function overlaps with FtsA. The protein is Cell division protein SepF of Micrococcus luteus (strain ATCC 4698 / DSM 20030 / JCM 1464 / CCM 169 / CCUG 5858 / IAM 1056 / NBRC 3333 / NCIMB 9278 / NCTC 2665 / VKM Ac-2230) (Micrococcus lysodeikticus).